The following is a 547-amino-acid chain: Methionine--tRNA ligase (547 aa).

Residues 15-25 (PYANGSLHLGH) carry the 'HIGH' region motif. The Zn(2+) site is built by Cys146, Cys149, Cys159, and Cys162. The short motif at 332–336 (KMSKS) is the 'KMSKS' region element. Lys335 contributes to the ATP binding site.

The protein belongs to the class-I aminoacyl-tRNA synthetase family. MetG type 1 subfamily. As to quaternary structure, monomer. The cofactor is Zn(2+).

The protein localises to the cytoplasm. It carries out the reaction tRNA(Met) + L-methionine + ATP = L-methionyl-tRNA(Met) + AMP + diphosphate. Functionally, is required not only for elongation of protein synthesis but also for the initiation of all mRNA translation through initiator tRNA(fMet) aminoacylation. The chain is Methionine--tRNA ligase from Baumannia cicadellinicola subsp. Homalodisca coagulata.